Consider the following 122-residue polypeptide: Acidic phospholipase A2 BlatPLA2 (122 aa).

Cystine bridges form between C26/C115, C28/C44, C43/C95, C49/C122, C50/C88, C57/C81, and C75/C86. Ca(2+)-binding residues include Y27, G29, and G31. H47 is a catalytic residue. D48 lines the Ca(2+) pocket. D89 is an active-site residue.

This sequence belongs to the phospholipase A2 family. Group II subfamily. D49 sub-subfamily. Monomer. It depends on Ca(2+) as a cofactor. As to expression, expressed by the venom gland.

It is found in the secreted. It catalyses the reaction a 1,2-diacyl-sn-glycero-3-phosphocholine + H2O = a 1-acyl-sn-glycero-3-phosphocholine + a fatty acid + H(+). Its function is as follows. Acidic phospholipase A2 (PLA2) that only causes a mild edema, when subcutaneously injected in the mice foot. PLA2 catalyzes the calcium-dependent hydrolysis of the 2-acyl groups in 3-sn-phosphoglycerides. This Bothriechis lateralis (Side-striped palm pitviper) protein is Acidic phospholipase A2 BlatPLA2.